The sequence spans 217 residues: Large ribosomal subunit protein uL1A (217 aa).

N-acetylserine is present on S2. Position 47 is an N6-methyllysine; by RKM5 (K47). 2 positions are modified to phosphoserine: S79 and S86.

Belongs to the universal ribosomal protein uL1 family. As to quaternary structure, component of the large ribosomal subunit (LSU). Mature yeast ribosomes consist of a small (40S) and a large (60S) subunit. The 40S small subunit contains 1 molecule of ribosomal RNA (18S rRNA) and 33 different proteins (encoded by 57 genes). The large 60S subunit contains 3 rRNA molecules (25S, 5.8S and 5S rRNA) and 46 different proteins (encoded by 81 genes). uL1 forms part of the L1 stalk. In terms of processing, N-terminally acetylated by acetyltransferase NatA.

Its subcellular location is the cytoplasm. Its function is as follows. Component of the ribosome, a large ribonucleoprotein complex responsible for the synthesis of proteins in the cell. The small ribosomal subunit (SSU) binds messenger RNAs (mRNAs) and translates the encoded message by selecting cognate aminoacyl-transfer RNA (tRNA) molecules. The large subunit (LSU) contains the ribosomal catalytic site termed the peptidyl transferase center (PTC), which catalyzes the formation of peptide bonds, thereby polymerizing the amino acids delivered by tRNAs into a polypeptide chain. The nascent polypeptides leave the ribosome through a tunnel in the LSU and interact with protein factors that function in enzymatic processing, targeting, and the membrane insertion of nascent chains at the exit of the ribosomal tunnel. uL1 forms part of the L1 stalk, a mobile element that plays a role in evacuating the exit-site tRNA. This Saccharomyces cerevisiae (strain ATCC 204508 / S288c) (Baker's yeast) protein is Large ribosomal subunit protein uL1A.